A 105-amino-acid chain; its full sequence is uncharacterized protein (105 aa).

A disordered region spans residues 22–105; sequence GSAGHGATEA…KKRIIKGKVM (84 aa). The span at 61-83 shows a compositional bias: basic and acidic residues; that stretch reads HDSRPARGDARKRHCQENNKTDR. Residues 93 to 105 show a composition bias toward basic residues; that stretch reads NRRKKRIIKGKVM.

This is an uncharacterized protein from Escherichia coli (strain K12).